A 151-amino-acid chain; its full sequence is Deoxyuridine 5'-triphosphate nucleotidohydrolase (151 aa).

Residues 70–72 (RSG), N83, 87–89 (LID), and M97 contribute to the substrate site.

The protein belongs to the dUTPase family. Mg(2+) serves as cofactor.

It catalyses the reaction dUTP + H2O = dUMP + diphosphate + H(+). It functions in the pathway pyrimidine metabolism; dUMP biosynthesis; dUMP from dCTP (dUTP route): step 2/2. Functionally, this enzyme is involved in nucleotide metabolism: it produces dUMP, the immediate precursor of thymidine nucleotides and it decreases the intracellular concentration of dUTP so that uracil cannot be incorporated into DNA. In Hamiltonella defensa subsp. Acyrthosiphon pisum (strain 5AT), this protein is Deoxyuridine 5'-triphosphate nucleotidohydrolase.